Reading from the N-terminus, the 631-residue chain is tRNA uridine 5-carboxymethylaminomethyl modification enzyme MnmG (631 aa).

FAD contacts are provided by residues 13 to 18 (GGGHAG), V125, and S180. Residue 273 to 287 (GPRYCPSIEDKVNRY) coordinates NAD(+). Q370 serves as a coordination point for FAD.

Belongs to the MnmG family. Homodimer. Heterotetramer of two MnmE and two MnmG subunits. The cofactor is FAD.

It is found in the cytoplasm. Functionally, NAD-binding protein involved in the addition of a carboxymethylaminomethyl (cmnm) group at the wobble position (U34) of certain tRNAs, forming tRNA-cmnm(5)s(2)U34. The sequence is that of tRNA uridine 5-carboxymethylaminomethyl modification enzyme MnmG from Alcanivorax borkumensis (strain ATCC 700651 / DSM 11573 / NCIMB 13689 / SK2).